A 983-amino-acid polypeptide reads, in one-letter code: Receptor-type tyrosine-protein phosphatase-like N (983 aa).

An N-terminal signal peptide occupies residues 1-40 (MRRPRRPGGPAGCGGSEGSGGLRLLVCLLLLSGRPGGCSA). An RESP18 homology domain region spans residues 41 to 137 (ISAHGCLFDR…HPRDRSGSVP (97 aa)). The Lumenal portion of the chain corresponds to 41 to 579 (ISAHGCLFDR…RQAHGISPMR (539 aa)). Residues cysteine 59 and cysteine 68 are joined by a disulfide bond. A compositionally biased stretch (basic and acidic residues) spans 118–133 (RIPRLRPPEPHPRDRS). 3 disordered regions span residues 118-179 (RIPR…SPLS), 293-330 (RARA…SPPQ), and 399-420 (GDTA…ASST). Residues 148–158 (SQGNPTGSSPA) are compositionally biased toward polar residues. The span at 307-326 (RAEDSSEGHEEEVLGGHGEK) shows a compositional bias: basic and acidic residues. Phosphoserine occurs at positions 311 and 312. The interval 453–579 (SPLGQSQPTV…RQAHGISPMR (127 aa)) is sufficient for dimerization of proICA512. 2 N-linked (GlcNAc...) asparagine glycosylation sites follow: asparagine 510 and asparagine 528. Residues 580–604 (SLLLTLVALAGVAGLLVALAVALCM) form a helical membrane-spanning segment. A sufficient for dimerization of proICA512 region spans residues 605-736 (RHHSKQRDKE…PNTCATAQGE (132 aa)). Topologically, residues 605–983 (RHHSKQRDKE…VNAILKALPQ (379 aa)) are cytoplasmic. The interval 648 to 684 (RAEGQPEPSRVSSVSSQFSDAAQASPSSHSSTPSWCE) is disordered. Residues 652–681 (QPEPSRVSSVSSQFSDAAQASPSSHSSTPS) show a composition bias toward low complexity. The region spanning 713 to 973 (LAKEWQALCA…EFALTAVAEE (261 aa)) is the Tyrosine-protein phosphatase domain. Residue lysine 758 forms a Glycyl lysine isopeptide (Lys-Gly) (interchain with G-Cter in SUMO) linkage.

Belongs to the protein-tyrosine phosphatase family. Receptor class 8 subfamily. In terms of assembly, homodimer; shown for the unprocessed protein (proICA512) in the endoplasmic reticulum and resolved during protein maturation as ICA512-TMF seems to be predominantly monomeric in secretory granules; however, ICA512-CCF interacts with ICA512-TMF disrupting the ICA512-TMF:SNTB2 complex. The isolated lumenal RESP18 homology domain has been shown to form disulfide-linked homooligomers. Interacts (via cytoplasmic domain) with phosphorylated SNTB2; this protects PTPRN against cleavage by CAPN1 to produce ICA512-CCF. Dephosphorylation of SNTB2 upon insulin stimulation disrupts the interaction and results in PTPRN cleavage. Interacts with SNX19. ICA512-CCF interacts with PIAS4; in the nucleus. Interacts with STAT5B (phosphorylated); down-regulated by ICA512-CCF sumoylation; ICA512-CCF prevents STAT5B dephosphorylation; ICA512-CCF mediates interaction of STAT5B with PIAS4. Interacts (via RESP18 homology domain) with insulin and proinsulin. Interacts with PTPRN2, PTPRA and PTPRE. Subject to proteolytic cleavage at multiple sites. Subject to cleavage on a pair of basic residues. Following exocytosis of secretory granules in pancreatic beta-cells ICA512-TMF located in the plasma-membrane is cleaved by mu-type calpain CPN1 to yield ICA512-CCF. Post-translationally, N-glycosylated. In terms of processing, O-glycosylated. Sumoylated at two sites including Lys-758. Sumoylation decreases interaction with STAT5. As to expression, detected in pancreas islets. Detected in pancreas alpha, beta and delta cells, and in chromaffin cells in the adrenal medulla. Detected in amygdala, hypothalamus, autonomous nerve fibers and ganglia, especially at synaptic contacts. Detected in pituitary (at protein level). Detected in brain, specifically in cerebral cortex, diencephalon and brain stem.

The protein resides in the membrane. Its subcellular location is the cytoplasmic vesicle. It is found in the secretory vesicle membrane. It localises to the perikaryon. The protein localises to the cell projection. The protein resides in the axon. Its subcellular location is the synapse. It is found in the cell membrane. It localises to the endosome. The protein localises to the nucleus. Functionally, plays a role in vesicle-mediated secretory processes. Required for normal accumulation of secretory vesicles in hippocampus, pituitary and pancreatic islets. Required for the accumulation of normal levels of insulin-containing vesicles and preventing their degradation. Plays a role in insulin secretion in response to glucose stimuli. Required for normal accumulation of the neurotransmitters norepinephrine, dopamine and serotonin in the brain. In females, but not in males, required for normal accumulation and secretion of pituitary hormones, such as luteinizing hormone (LH) and follicle-stimulating hormone (FSH). Required to maintain normal levels of renin expression and renin release. Seems to lack intrinsic enzyme activity. Its function is as follows. ICA512-TMF regulates dynamics and exocytosis of insulin secretory granules (SGs); binding of ICA512-TMF to SNTB2/beta-2-syntrophin is proposed to restrain SGs mobility and exocytosis by tethering them to the actin cytoskeleton depending on UTRN; the function is inhibited by cytoplasmic ICA512-CFF dimerizing with ICA512-TMF and displacing SNTB2. In terms of biological role, ICA512-CCF translocated to the nucleus promotes expression of insulin and other granule-related genes; the function implicates binding to and regulating activity of STAT5B probably by preventing its dephosphorylation and potentially by inducing its sumoylation by recruiting PIAS4. Enhances pancreatic beta-cell proliferation by converging with signaling by STAT5B and STAT3. ICA512-CCF located in the cytoplasm regulates dynamics and exocytosis of insulin secretory granules (SGs) by dimerizing with ICA512-TMF and displacing SNTB2 thus enhancing SGs mobility and exocytosis. This Rattus norvegicus (Rat) protein is Receptor-type tyrosine-protein phosphatase-like N (Ptprn).